The following is a 369-amino-acid chain: MEEKKIRKVTLCDICHQSKAVMKRPKNLQKLCKECFYHVFETEIHNTIVDAQLFKPGDKVAIGASGGKDSTVLASVLKTLNEKYNYGLTLVLLSIDEGIVGYRDDSLATVKRNQIQYEMPLEIISYKDLYNWSMDEIVSCAGIRSSCTYCGVLRRQALDRGAAKLEIDHVVTGHNADDMAETVLMNLLRGDIARLERSCSILTSSEGSPIKRSKPFKYTYQKEIVLYAHYKKLDYFSTECSYAPEAFRGTARELLKALESVRPSCIMDIIYSGEHLVVAHKKKRTTEKYKNKPKKNIETEVNSDGSVNLTKKTDGSRCEKCGYLSSNKICKACVLLAGLEMNRPKVNIENNTAVEGSAKVMKTLEQLSF.

It belongs to the TtcA family. CTU1/NCS6/ATPBD3 subfamily.

It localises to the cytoplasm. Its pathway is tRNA modification; 5-methoxycarbonylmethyl-2-thiouridine-tRNA biosynthesis. Plays a central role in 2-thiolation of mcm(5)S(2)U at tRNA wobble positions of tRNA(Lys), tRNA(Glu) and tRNA(Gln). Directly binds tRNAs and probably acts by catalyzing adenylation of tRNAs, an intermediate required for 2-thiolation. It is unclear whether it acts as a sulfurtransferase that transfers sulfur from thiocarboxylated URM1 onto the uridine of tRNAs at wobble position. Prior mcm(5) tRNA modification by the elongator complex is required for 2-thiolation. May also be involved in protein urmylation. The chain is Cytoplasmic tRNA 2-thiolation protein 1 from Meyerozyma guilliermondii (strain ATCC 6260 / CBS 566 / DSM 6381 / JCM 1539 / NBRC 10279 / NRRL Y-324) (Yeast).